The sequence spans 488 residues: Nitrogen metabolite repression protein nmr (488 aa).

A disordered region spans residues 1-45 (MPAEILSELPLRPAPRDIKIPNAMHNEERRHKHSRSSYSEMSPLM). Residues 14–29 (APRDIKIPNAMHNEER) show a composition bias toward basic and acidic residues. A compositionally biased stretch (polar residues) spans 36 to 45 (SSYSEMSPLM). NADP(+)-binding positions include 71 to 76 (NAAGRQ), Asn165, Lys215, and 237 to 240 (YNNN). Residues 75–76 (RQ), 165–167 (NTT), Lys215, and 237–240 (YNNN) contribute to the NAD(+) site. The segment at 412 to 488 (EEYDGGGGNN…NKRADEEWLA (77 aa)) is dispensable for NMR function. Residues 422–488 (IGNNHNNHHQ…NKRADEEWLA (67 aa)) form a disordered region. The span at 438-459 (HQNGHQNGHNGINGHIVNGGVD) shows a compositional bias: low complexity. A compositionally biased stretch (acidic residues) spans 460 to 473 (SESEEEDSDSDDEG).

It belongs to the NmrA-type oxidoreductase family. As to quaternary structure, interacts with nit-2.

The protein localises to the nucleus. In terms of biological role, may be a redox sensor protein. Negative transcriptional regulator involved in the post-transcriptional modulation of the GATA-type transcription factor nit-2, forming part of a system controlling nitrogen metabolite repression. The polypeptide is Nitrogen metabolite repression protein nmr (nmr) (Neurospora crassa (strain ATCC 24698 / 74-OR23-1A / CBS 708.71 / DSM 1257 / FGSC 987)).